The sequence spans 903 residues: Protein translocase subunit SecA (903 aa).

ATP is bound by residues glutamine 85, 103–107 (GEGKT), and aspartate 492. The disordered stretch occupies residues 863 to 890 (GDGVKQPVRRDKKVGRNSPCPCGSGKKY). Zn(2+) contacts are provided by cysteine 882, cysteine 884, cysteine 893, and cysteine 894.

It belongs to the SecA family. Monomer and homodimer. Part of the essential Sec protein translocation apparatus which comprises SecA, SecYEG and auxiliary proteins SecDF. Other proteins may also be involved. Zn(2+) serves as cofactor.

The protein resides in the cell membrane. It localises to the cytoplasm. The catalysed reaction is ATP + H2O + cellular proteinSide 1 = ADP + phosphate + cellular proteinSide 2.. In terms of biological role, part of the Sec protein translocase complex. Interacts with the SecYEG preprotein conducting channel. Has a central role in coupling the hydrolysis of ATP to the transfer of proteins into and across the cell membrane, serving as an ATP-driven molecular motor driving the stepwise translocation of polypeptide chains across the membrane. In Desulforudis audaxviator (strain MP104C), this protein is Protein translocase subunit SecA.